Reading from the N-terminus, the 427-residue chain is Glutamate-1-semialdehyde 2,1-aminomutase (427 aa).

K267 bears the N6-(pyridoxal phosphate)lysine mark.

Belongs to the class-III pyridoxal-phosphate-dependent aminotransferase family. HemL subfamily. In terms of assembly, homodimer. It depends on pyridoxal 5'-phosphate as a cofactor.

It is found in the cytoplasm. It catalyses the reaction (S)-4-amino-5-oxopentanoate = 5-aminolevulinate. Its pathway is porphyrin-containing compound metabolism; protoporphyrin-IX biosynthesis; 5-aminolevulinate from L-glutamyl-tRNA(Glu): step 2/2. This is Glutamate-1-semialdehyde 2,1-aminomutase from Geobacter metallireducens (strain ATCC 53774 / DSM 7210 / GS-15).